A 289-amino-acid chain; its full sequence is E3 ubiquitin-protein ligase MARCHF8 (289 aa).

Residues 1 to 68 (MNMPLHQISA…SAPVSSFPRT (68 aa)) are disordered. A compositionally biased stretch (basic and acidic residues) spans 25–39 (KTKEKEREEQNEKTL). Positions 50–64 (SKAGGSSVASAPVSS) are enriched in low complexity. The RING-CH-type zinc-finger motif lies at 70-131 (VTPSNQDICR…ELCKYEFIME (62 aa)). Residues Cys-78, Cys-81, Cys-95, Cys-97, His-105, Cys-108, Cys-121, and Cys-124 each coordinate Zn(2+). Transmembrane regions (helical) follow at residues 155-175 (CSVT…YVLI) and 195-215 (FWTK…FMYV).

In terms of assembly, interacts with CD86.

The protein localises to the golgi apparatus membrane. The protein resides in the endoplasmic reticulum membrane. It is found in the cytoplasmic vesicle membrane. Its subcellular location is the lysosome membrane. It localises to the early endosome membrane. It catalyses the reaction S-ubiquitinyl-[E2 ubiquitin-conjugating enzyme]-L-cysteine + [acceptor protein]-L-lysine = [E2 ubiquitin-conjugating enzyme]-L-cysteine + N(6)-ubiquitinyl-[acceptor protein]-L-lysine.. It participates in protein modification; protein ubiquitination. In terms of biological role, E3 ubiquitin-protein ligase that plays several important roles in innate immunity and adaptive immunity. Mediates ubiquitination of CD86 and MHC class II proteins, such as HLA-DR alpha and beta, and promotes their subsequent endocytosis and sorting to lysosomes via multivesicular bodies. Possesses a very broad antiviral activity by specifically inactivating different viral fusion proteins. Targets and ubiquitinates cytoplasmic lysine residues of viral envelope glycoproteins with single transmembrane domains leading to their lysosomal degradation. Mediates the regulation of constitutive ubiquitination and trafficking of the viral restriction factor BST2 within the endocytic pathway. Plays a role in maintenance of immune tolerance to self by promoting the turnover and proteasomal degradation of PD-L1/CD274 via ubiquitination. Catalyzes the 'Lys-63'-linked polyubiquitylation of cGAS thereby inhibiting its DNA binding ability and impairing its antiviral innate immunity. Negatively regulates IL7-mediated T-cell homeostasis by mediating 'Lys-27'-linked polyubiquitination of IL7R, leading to its lysosomal degradation. This Bos taurus (Bovine) protein is E3 ubiquitin-protein ligase MARCHF8 (MARCHF8).